Reading from the N-terminus, the 118-residue chain is Large ribosomal subunit protein bL20 (118 aa).

It belongs to the bacterial ribosomal protein bL20 family.

In terms of biological role, binds directly to 23S ribosomal RNA and is necessary for the in vitro assembly process of the 50S ribosomal subunit. It is not involved in the protein synthesizing functions of that subunit. The chain is Large ribosomal subunit protein bL20 from Acidiphilium cryptum (strain JF-5).